Consider the following 109-residue polypeptide: Transmembrane protein 233 (109 aa).

A disordered region spans residues 1–30; it reads MSQYAPSPDFKRALDSSPEANTEDDKTEED. The Cytoplasmic portion of the chain corresponds to 1-41; it reads MSQYAPSPDFKRALDSSPEANTEDDKTEEDVPMPKNYLWLT. Over residues 21–30 the composition is skewed to acidic residues; the sequence is NTEDDKTEED. Residues 42–62 constitute an intramembrane region (helical); sequence IVSCFCPAYPINIVALVFSIM. The Cytoplasmic portion of the chain corresponds to 63–84; it reads SLNSYNDGDYEGARRLGRNAKW. A helical transmembrane segment spans residues 85 to 105; sequence VAIASIIIGLLIIGISCAVHF. The Extracellular portion of the chain corresponds to 106 to 109; sequence TRNA.

The protein belongs to the CD225/Dispanin family. In terms of assembly, interacts with the giant stinging tree toxin ExTxA (AC P0DQP3). Interacts with Nav1.7/SCN9A. Interacts with Nav1.1/SCN1A, Nav1.2/SCN2A, Nav1.3/SCN3A, Nav1.4/SCN4A, Nav1.5/SCN5A, and Nav1.6/SCN8A.

The protein localises to the cell membrane. Probable accessory protein of voltage-gated sodium channels. The sequence is that of Transmembrane protein 233 from Homo sapiens (Human).